The sequence spans 1374 residues: Probable multidrug resistance-associated protein lethal(2)03659 (1374 aa).

Positions 1 to 40 (MDKQPVLEPTFDSVSERENTSIEESSLLENNGFDHRNKDE) are disordered. 6 helical membrane passes run 159–179 (LLRV…VVEL), 205–225 (AGFY…MILT), 282–302 (YTVH…YLMY), 305–325 (IGIS…IQMY), 404–424 (IFLS…EIAF), and 426–446 (ITAY…SAII). The ABC transmembrane type-1 1 domain occupies 168 to 449 (GFPGLAIFVV…YVPSAIIQTA (282 aa)). Positions 466-492 (ELGSSDKSEGPSKDTVPGNPPSNNNEA) are disordered. In terms of domain architecture, ABC transporter 1 spans 499–722 (ISIRDLKAKW…GLITGLGSLS (224 aa)). 534 to 541 (GLTGSGKS) provides a ligand contact to ATP. N-linked (GlcNAc...) asparagine glycosylation occurs at Asn561. A disordered region spans residues 723-766 (KTDKAKTEEQEPLNLNSPDNKNEVTPIKENSEQTVGGSSSGKEH). 5 helical membrane-spanning segments follow: residues 787-807 (GGGL…QVAV), 845-865 (LIII…FNIA), 913-933 (VVLV…IVIA), 938-958 (LLLV…NLYL), and 1025-1045 (YCMN…FFAF). The region spanning 793–1079 (FLVMLSSSVL…GVRQTAELEN (287 aa)) is the ABC transmembrane type-1 2 domain. An ABC transporter 2 domain is found at 1119-1352 (FKELNLRYTP…SDSKVFHNLV (234 aa)). ATP is bound at residue 1153–1160 (GRTGAGKS). Residues Asn1254 and Asn1353 are each glycosylated (N-linked (GlcNAc...) asparagine).

The protein belongs to the ABC transporter superfamily. ABCC family. Conjugate transporter (TC 3.A.1.208) subfamily. As to expression, uniform expression in embryos.

It is found in the membrane. In terms of biological role, vital for development. The protein is Probable multidrug resistance-associated protein lethal(2)03659 (l(2)03659) of Drosophila melanogaster (Fruit fly).